We begin with the raw amino-acid sequence, 505 residues long: Tyrosine-protein kinase Blk (505 aa).

Residues 1-37 (MGLVSSKKPDKEKPIKEKDKGQWSPLKVSAQDKDAPP) are disordered. A lipid anchor (N-myristoyl glycine) is attached at Gly2. Over residues 7-21 (KKPDKEKPIKEKDKG) the composition is skewed to basic and acidic residues. Residues 58–118 (EDKHFVVALY…PSNFVARVES (61 aa)) enclose the SH3 domain. In terms of domain architecture, SH2 spans 124–220 (WFFRSQGRKE…GLCQRLTLPC (97 aa)). Residues 241–494 (LRLVRKLGSG…FLQSVLEDFY (254 aa)) enclose the Protein kinase domain. Residues 247 to 255 (LGSGQFGEV) and Lys269 each bind ATP. Asp360 acts as the Proton acceptor in catalysis. A Phosphotyrosine; by autocatalysis modification is found at Tyr389.

The protein belongs to the protein kinase superfamily. Tyr protein kinase family. SRC subfamily. In terms of assembly, interacts with CBL (via SH2 domain). Interacts with CD79A and CD79B (via SH2 domain). In terms of processing, phosphorylated on tyrosine residues after antibody-mediated surface engagement of the B-cell antigen receptor (BCR). Ubiquitination of activated BLK by the UBE3A ubiquitin protein ligase leads to its degradation by the ubiquitin-proteasome pathway. Expressed in lymphatic organs, pancreatic islets, Leydig cells, striate ducts of salivary glands and hair follicles.

It is found in the cell membrane. It catalyses the reaction L-tyrosyl-[protein] + ATP = O-phospho-L-tyrosyl-[protein] + ADP + H(+). Antibody-mediated surface engagement of the B-cell antigen receptor (BCR) which results in the phosphorylation of BLK on tyrosine residues, stimulates the enzymatic activity. Its function is as follows. Non-receptor tyrosine kinase involved in B-lymphocyte development, differentiation and signaling. B-cell receptor (BCR) signaling requires a tight regulation of several protein tyrosine kinases and phosphatases, and associated coreceptors. Binding of antigen to the B-cell antigen receptor (BCR) triggers signaling that ultimately leads to B-cell activation. Signaling through BLK plays an important role in transmitting signals through surface immunoglobulins and supports the pro-B to pre-B transition, as well as the signaling for growth arrest and apoptosis downstream of B-cell receptor. Specifically binds and phosphorylates CD79A at 'Tyr-188'and 'Tyr-199', as well as CD79B at 'Tyr-196' and 'Tyr-207'. Also phosphorylates the immunoglobulin G receptors FCGR2A, FCGR2B and FCGR2C. With FYN and LYN, plays an essential role in pre-B-cell receptor (pre-BCR)-mediated NF-kappa-B activation. Also contributes to BTK activation by indirectly stimulating BTK intramolecular autophosphorylation. In pancreatic islets, acts as a modulator of beta-cells function through the up-regulation of PDX1 and NKX6-1 and consequent stimulation of insulin secretion in response to glucose. Phosphorylates CGAS, promoting retention of CGAS in the cytosol. This is Tyrosine-protein kinase Blk (BLK) from Homo sapiens (Human).